Here is a 165-residue protein sequence, read N- to C-terminus: Putative inactive neutral ceramidase B (165 aa).

It belongs to the neutral ceramidase family. Ubiquitous. Expression is reduced with increasing age and in late-onset Alzheimer disease (LOAD) patients. This reduction is even more pronounced in patients with an affected mother.

The protein is Putative inactive neutral ceramidase B of Homo sapiens (Human).